The primary structure comprises 315 residues: Pantothenate synthetase (315 aa).

45 to 52 (MGALHEGH) is a binding site for ATP. His52 acts as the Proton donor in catalysis. Gln77 is a binding site for (R)-pantoate. Beta-alanine is bound at residue Gln77. 163 to 166 (GEKD) is an ATP binding site. (R)-pantoate is bound at residue Gln169. ATP contacts are provided by residues Val192 and 200-203 (MSSR).

The protein belongs to the pantothenate synthetase family. As to quaternary structure, homodimer.

The protein localises to the cytoplasm. The enzyme catalyses (R)-pantoate + beta-alanine + ATP = (R)-pantothenate + AMP + diphosphate + H(+). It participates in cofactor biosynthesis; (R)-pantothenate biosynthesis; (R)-pantothenate from (R)-pantoate and beta-alanine: step 1/1. Its function is as follows. Catalyzes the condensation of pantoate with beta-alanine in an ATP-dependent reaction via a pantoyl-adenylate intermediate. This is Pantothenate synthetase from Mycobacterium ulcerans (strain Agy99).